The sequence spans 172 residues: uncharacterized protein (172 aa).

Residues 12–172 (IRLRCMEDRD…IAVYERKSYN (161 aa)) enclose the N-acetyltransferase domain.

This is an uncharacterized protein from Bacillus subtilis (strain 168).